Reading from the N-terminus, the 259-residue chain is Proteasome subunit alpha (259 aa).

Belongs to the peptidase T1A family. As to quaternary structure, the 20S proteasome core is composed of 14 alpha and 14 beta subunits that assemble into four stacked heptameric rings, resulting in a barrel-shaped structure. The two inner rings, each composed of seven catalytic beta subunits, are sandwiched by two outer rings, each composed of seven alpha subunits. The catalytic chamber with the active sites is on the inside of the barrel. Has a gated structure, the ends of the cylinder being occluded by the N-termini of the alpha-subunits. Is capped at one or both ends by the proteasome regulatory ATPase, PAN.

It localises to the cytoplasm. The formation of the proteasomal ATPase PAN-20S proteasome complex, via the docking of the C-termini of PAN into the intersubunit pockets in the alpha-rings, triggers opening of the gate for substrate entry. Interconversion between the open-gate and close-gate conformations leads to a dynamic regulation of the 20S proteasome proteolysis activity. In terms of biological role, component of the proteasome core, a large protease complex with broad specificity involved in protein degradation. The polypeptide is Proteasome subunit alpha (Methanococcus maripaludis (strain C7 / ATCC BAA-1331)).